A 75-amino-acid polypeptide reads, in one-letter code: Putative antitoxin VapB17 (75 aa).

Its function is as follows. Putative antitoxin component of a possible type II toxin-antitoxin (TA) system. The cognate toxin is VapC17. The protein is Putative antitoxin VapB17 (vapB17) of Mycobacterium tuberculosis (strain CDC 1551 / Oshkosh).